Here is a 313-residue protein sequence, read N- to C-terminus: Porphobilinogen deaminase (313 aa).

S-(dipyrrolylmethanemethyl)cysteine is present on C249.

Belongs to the HMBS family. Monomer. It depends on dipyrromethane as a cofactor.

It carries out the reaction 4 porphobilinogen + H2O = hydroxymethylbilane + 4 NH4(+). It participates in porphyrin-containing compound metabolism; protoporphyrin-IX biosynthesis; coproporphyrinogen-III from 5-aminolevulinate: step 2/4. In terms of biological role, tetrapolymerization of the monopyrrole PBG into the hydroxymethylbilane pre-uroporphyrinogen in several discrete steps. The sequence is that of Porphobilinogen deaminase from Paracoccus denitrificans (strain Pd 1222).